Reading from the N-terminus, the 150-residue chain is Transcriptional repressor NrdR (150 aa).

The tract at residues 1-26 (MKCPFCGNSDSKVVDSRPDKGGSGIR) is disordered. A zinc finger lies at 3-34 (CPFCGNSDSKVVDSRPDKGGSGIRRRRECEQC). The 91-residue stretch at 49–139 (PLVLKKDGRR…VYRSFRDINE (91 aa)) folds into the ATP-cone domain.

The protein belongs to the NrdR family. Requires Zn(2+) as cofactor.

In terms of biological role, negatively regulates transcription of bacterial ribonucleotide reductase nrd genes and operons by binding to NrdR-boxes. In Pelobacter propionicus (strain DSM 2379 / NBRC 103807 / OttBd1), this protein is Transcriptional repressor NrdR.